The following is a 377-amino-acid chain: DNA-directed RNA polymerase subunit alpha (377 aa).

Positions 1–259 (MSDSSHNLLY…KHFSVFEKMD (259 aa)) are alpha N-terminal domain (alpha-NTD). The segment at 276–377 (KDDILHKLVL…KIRLSKNTKG (102 aa)) is alpha C-terminal domain (alpha-CTD).

The protein belongs to the RNA polymerase alpha chain family. As to quaternary structure, homodimer. The RNAP catalytic core consists of 2 alpha, 1 beta, 1 beta' and 1 omega subunit. When a sigma factor is associated with the core the holoenzyme is formed, which can initiate transcription.

It catalyses the reaction RNA(n) + a ribonucleoside 5'-triphosphate = RNA(n+1) + diphosphate. DNA-dependent RNA polymerase catalyzes the transcription of DNA into RNA using the four ribonucleoside triphosphates as substrates. The chain is DNA-directed RNA polymerase subunit alpha from Chlamydia trachomatis serovar A (strain ATCC VR-571B / DSM 19440 / HAR-13).